The chain runs to 95 residues: Integration host factor subunit beta (95 aa).

It belongs to the bacterial histone-like protein family. In terms of assembly, heterodimer of an alpha and a beta chain.

Its function is as follows. This protein is one of the two subunits of integration host factor, a specific DNA-binding protein that functions in genetic recombination as well as in transcriptional and translational control. This is Integration host factor subunit beta from Shewanella loihica (strain ATCC BAA-1088 / PV-4).